The following is a 369-amino-acid chain: Fructose-bisphosphate aldolase 2 (369 aa).

Aspartate 40 contributes to the dihydroxyacetone phosphate binding site. Positions 42 and 45 each coordinate D-glyceraldehyde 3-phosphate. Arginine 49 lines the beta-D-fructose 1,6-bisphosphate pocket. Residue lysine 113 participates in D-glyceraldehyde 3-phosphate binding. Lysine 152 contacts dihydroxyacetone phosphate. Residue glutamate 195 participates in D-glyceraldehyde 3-phosphate binding. Glutamate 195 functions as the Proton acceptor in the catalytic mechanism. 3 residues coordinate dihydroxyacetone phosphate: lysine 237, serine 279, and glycine 280. Lysine 237 functions as the Schiff-base intermediate with dihydroxyacetone phosphate in the catalytic mechanism. Beta-D-fructose 1,6-bisphosphate is bound by residues 279–281 (SGG) and serine 307. The dihydroxyacetone phosphate site is built by glycine 309 and arginine 310. A beta-D-fructose 1,6-bisphosphate-binding site is contributed by arginine 310.

It belongs to the class I fructose-bisphosphate aldolase family.

Its subcellular location is the cytoplasm. The protein resides in the membrane. It localises to the host cell membrane. It carries out the reaction beta-D-fructose 1,6-bisphosphate = D-glyceraldehyde 3-phosphate + dihydroxyacetone phosphate. It participates in carbohydrate degradation; glycolysis; D-glyceraldehyde 3-phosphate and glycerone phosphate from D-glucose: step 4/4. Its function is as follows. Plays a key role in glycolysis by catalyzing the cleavage of fructose 1,6-bisphosphate into dihydroxyacetone phosphate and glyceraldehyde 3-phosphate. In Plasmodium berghei (strain Anka), this protein is Fructose-bisphosphate aldolase 2 (ALDO2).